An 86-amino-acid chain; its full sequence is Large ribosomal subunit protein uL23 (86 aa).

This sequence belongs to the universal ribosomal protein uL23 family. In terms of assembly, part of the 50S ribosomal subunit. Contacts protein L29.

Functionally, binds to 23S rRNA. One of the proteins that surrounds the polypeptide exit tunnel on the outside of the ribosome. The polypeptide is Large ribosomal subunit protein uL23 (Thermococcus onnurineus (strain NA1)).